A 158-amino-acid chain; its full sequence is Deoxyuridine 5'-triphosphate nucleotidohydrolase (158 aa).

Substrate-binding positions include 75-77 (RSG), asparagine 88, 92-94 (TVD), and lysine 102.

It belongs to the dUTPase family. It depends on Mg(2+) as a cofactor.

The catalysed reaction is dUTP + H2O = dUMP + diphosphate + H(+). It participates in pyrimidine metabolism; dUMP biosynthesis; dUMP from dCTP (dUTP route): step 2/2. Its function is as follows. This enzyme is involved in nucleotide metabolism: it produces dUMP, the immediate precursor of thymidine nucleotides and it decreases the intracellular concentration of dUTP so that uracil cannot be incorporated into DNA. The polypeptide is Deoxyuridine 5'-triphosphate nucleotidohydrolase (Bifidobacterium longum (strain DJO10A)).